Consider the following 31-residue polypeptide: Cyclotide psybry B (31 aa).

Positions 1-31 (GFNPCGETCWNKPTCHAPGCTCSIANICVRN) form a cross-link, cyclopeptide (Gly-Asn). Cystine bridges form between C5/C20, C9/C22, and C15/C28.

In terms of processing, this is a cyclic peptide.

Functionally, probably participates in a plant defense mechanism. This Psychotria brachyceras protein is Cyclotide psybry B.